Reading from the N-terminus, the 299-residue chain is tRNA dimethylallyltransferase (299 aa).

Residue 13–20 (GPTASGKT) coordinates ATP. Substrate is bound at residue 15–20 (TASGKT). Residues 38-41 (DSRQ) form an interaction with substrate tRNA region.

Belongs to the IPP transferase family. Monomer. It depends on Mg(2+) as a cofactor.

The catalysed reaction is adenosine(37) in tRNA + dimethylallyl diphosphate = N(6)-dimethylallyladenosine(37) in tRNA + diphosphate. Functionally, catalyzes the transfer of a dimethylallyl group onto the adenine at position 37 in tRNAs that read codons beginning with uridine, leading to the formation of N6-(dimethylallyl)adenosine (i(6)A). This chain is tRNA dimethylallyltransferase, found in Synechococcus sp. (strain CC9605).